An 863-amino-acid polypeptide reads, in one-letter code: Facilitated trehalose transporter Tret1 (863 aa).

Residues 1–208 are disordered; that stretch reads MSGRDNRGAG…RIGFQQQKAT (208 aa). Over 1 to 398 the chain is Cytoplasmic; that stretch reads MSGRDNRGAG…VYRPTTNPIY (398 aa). Over residues 28–46 the composition is skewed to basic and acidic residues; that stretch reads KLKEKLTRAGEELGYHRVE. Residues 47–59 show a composition bias toward polar residues; the sequence is SNLSASNTGTSLD. Low complexity predominate over residues 72 to 85; sequence AAPQRHPQQQFPHL. Composition is skewed to polar residues over residues 114–129 and 177–187; these read PPQQ…RSSG and KPQQQGNNKAA. Ser254, Ser255, and Ser256 each carry phosphoserine. The tract at residues 286–307 is disordered; that stretch reads VLQGSSTDSDEEGDDAEHKRLI. Phosphoserine occurs at positions 326 and 328. The segment at 332-354 is disordered; sequence FLTSRQNFQQQRSISTDSRKSRR. Residues 336 to 347 are compositionally biased toward polar residues; sequence RQNFQQQRSIST. The helical transmembrane segment at 399-419 threads the bilayer; the sequence is IWTQVLAALSVSLGSLVVGFA. Over 420–446 the chain is Extracellular; the sequence is SAYTSPALVSMTNTNLTSFVVTPQAAS. Asn434 is a glycosylation site (N-linked (GlcNAc...) asparagine). The chain crosses the membrane as a helical span at residues 447–467; the sequence is WVGGIMPLAGLAGGIAGGPFI. Residues 468–479 lie on the Cytoplasmic side of the membrane; sequence EYLGRRNTILAT. The helical transmembrane segment at 480–500 threads the bilayer; the sequence is AVPFIISWLLIACAVNVVMVL. At 501–503 the chain is on the extracellular side; sequence CGR. The helical transmembrane segment at 504 to 524 threads the bilayer; the sequence is FLAGFCVGIASLSLPVYLGET. At 525-530 the chain is on the cytoplasmic side; it reads VQPEVR. A helical transmembrane segment spans residues 531–551; that stretch reads GTLGLLPTAFGNIGILLCFVA. At 552 to 558 the chain is on the extracellular side; that stretch reads GTYMDWS. The chain crosses the membrane as a helical span at residues 559–579; the sequence is MLAFLGGTLPVPFLILMFLIP. At 580–642 the chain is on the cytoplasmic side; that stretch reads ETPRWYVSRG…ELLKRSNLKP (63 aa). The helical transmembrane segment at 643-663 threads the bilayer; that stretch reads LSISLGLMFFQQLSGINAVIF. Over 664–679 the chain is Extracellular; the sequence is YTVQIFQDAGSTIDGN. A helical membrane pass occupies residues 680–700; it reads VCTIIVGVVNFMATFIATVLI. The Cytoplasmic segment spans residues 701–706; that stretch reads DRAGRK. Residues 707-727 traverse the membrane as a helical segment; it reads ILLYVSNVAMILTLFVLGGFF. At 728–746 the chain is on the extracellular side; that stretch reads YCKSTGMDTSNVGWLPLSC. The helical transmembrane segment at 747 to 767 threads the bilayer; it reads FVVYILGFSLGFGPIPWLMMG. Residues 768 to 773 lie on the Cytoplasmic side of the membrane; sequence EILPAK. The chain crosses the membrane as a helical span at residues 774-794; that stretch reads IRGSAASVATAFNWSCTFVVT. Residues 795–807 lie on the Extracellular side of the membrane; that stretch reads KSFQDMIDVMGAH. The chain crosses the membrane as a helical span at residues 808 to 828; that stretch reads GAFWMFGAICFVGLFFVIFYV. At 829–863 the chain is on the cytoplasmic side; sequence PETQGKTLEDIERKMMGRVRRMSSVANIKPLSFNM. Phosphoserine is present on residues Ser851 and Ser852.

Belongs to the major facilitator superfamily. Sugar transporter (TC 2.A.1.1) family. Trehalose transporter subfamily.

The protein resides in the cell membrane. In terms of biological role, low-capacity facilitative transporter for trehalose. Does not transport maltose, sucrose or lactose. Mediates the bidirectional transfer of trehalose. Responsible for the transport of trehalose synthesized in the fat body and the incorporation of trehalose into other tissues that require a carbon source, thereby regulating trehalose levels in the hemolymph. The polypeptide is Facilitated trehalose transporter Tret1 (Drosophila mojavensis (Fruit fly)).